The following is a 470-amino-acid chain: Negative regulator of sexual conjugation and meiosis (470 aa).

In terms of domain architecture, Protein kinase spans 18–295; it reads LRFVSIIGAG…ITLPELSTLV (278 aa). Residues 24–32 and Lys-47 each bind ATP; that span reads IGAGAYGVV. Asp-143 acts as the Proton acceptor in catalysis. The residue at position 469 (Ser-469) is a Phosphoserine.

Belongs to the protein kinase superfamily. Ser/Thr protein kinase family.

The enzyme catalyses L-seryl-[protein] + ATP = O-phospho-L-seryl-[protein] + ADP + H(+). It catalyses the reaction L-threonyl-[protein] + ATP = O-phospho-L-threonyl-[protein] + ADP + H(+). Functionally, this protein is a negative regulator of both sexual conjugation and meiosis. It phosphorylates mei2. It blocks the onset of meiosis until conjugation takes place. In Schizosaccharomyces pombe (strain 972 / ATCC 24843) (Fission yeast), this protein is Negative regulator of sexual conjugation and meiosis (ran1).